The chain runs to 1340 residues: Lysine-specific demethylase ELF6 (1340 aa).

The 42-residue stretch at 16–57 folds into the JmjN domain; that stretch reads APVFRPTDTEFADPIAYISKIEKEASAFGICKIIPPLPKPSK. Residues 195–245 are disordered; the sequence is QRKRRGRGFYQRKTENNDPSGKNGEKSSPEVEKAPLASTSLSSQDSSKQKN. Residues 217-227 are compositionally biased toward basic and acidic residues; the sequence is NGEKSSPEVEK. Positions 262-428 constitute a JmjC domain; sequence NSSWNLQMIA…VAKEAAVRRA (167 aa). Positions 305, 307, and 396 each coordinate Fe cation. The Nuclear localization signal 1 signature appears at 818–825; it reads GKKEEKII. A disordered region spans residues 1092 to 1225; the sequence is GEPLESSDIL…SRQQEVPTTT (134 aa). The segment covering 1099–1115 has biased composition (polar residues); it reads DILSSSNGDEASSNGLQ. Positions 1124-1133 are enriched in low complexity; the sequence is ESEVSSSENT. A compositionally biased stretch (basic and acidic residues) spans 1188 to 1201; it reads SLKHTETSDEEKKP. A compositionally biased stretch (polar residues) spans 1215-1225; that stretch reads GSRQQEVPTTT. C2H2-type zinc fingers lie at residues 1228–1250, 1251–1275, 1281–1305, and 1311–1337; these read NRCY…THKR, NRCT…QRVH, FECS…LRLH, and YICK…KTMH. Zn(2+) is bound by residues Cys-1230, Cys-1235, His-1248, Cys-1253, Cys-1258, His-1265, His-1271, His-1275, Cys-1283, Cys-1288, His-1301, His-1305, Cys-1313, Cys-1318, His-1331, and His-1337. The Nuclear localization signal 2 motif lies at 1248–1255; it reads HKRNRCTH. The tract at residues 1260-1333 is DNA-binding; it reads KKFRAHKYLV…FVSDYSRHRR (74 aa).

Belongs to the JHDM3 histone demethylase family. In terms of assembly, interacts with BZR2 (via N-terminus). Expressed at low levels in seedlings, cotyledons and leaves. Detected in inflorescences, stems, roots and siliques but not in shoot apical meristems or root tips. Accumulates in flowers and embryos.

The protein resides in the nucleus. It carries out the reaction N(6),N(6),N(6)-trimethyl-L-lysyl(27)-[histone H3] + 2-oxoglutarate + O2 = N(6),N(6)-dimethyl-L-lysyl(27)-[histone H3] + formaldehyde + succinate + CO2. It catalyses the reaction N(6),N(6)-dimethyl-L-lysyl(27)-[histone H3] + 2-oxoglutarate + O2 = N(6)-methyl-L-lysyl(27)-[histone H3] + formaldehyde + succinate + CO2. Functionally, histone demethylase that demethylates 'Lys-27' (H3K27me) of histone H3, thus acting as a positive regulator of gene expression. Demethylates tri-methylated (H3K27me3) and di-methylated (H3K27me2) H3K27me. Inactive on H3K27me1, H3K4me3, H3K9me2 and H3K36me3. Acts as a repressor of the photoperiodic flowering pathway and of FT. May also be active on H3K4me. Binds around the transcription start site of the FT locus. Required for epigenetic reprogramming by resetting the expression of the floral repressor FLC locus, thus aluviating cold-mediated FLC epigenetically silencing occurring during vernalization and preventing inapropriate epigenetic states inheritence. In terms of biological role, together with REF6, required for H3K27me3 resetting (especially in constitutive heterochromatin within the pericentromeric regions) and transgenerational inheritance of histone marks, thus acting in safeguarding genome and epigenome integrity during sexual reproduction. The sequence is that of Lysine-specific demethylase ELF6 from Arabidopsis thaliana (Mouse-ear cress).